A 114-amino-acid polypeptide reads, in one-letter code: Large ribosomal subunit protein bL19 (114 aa).

The protein belongs to the bacterial ribosomal protein bL19 family.

This protein is located at the 30S-50S ribosomal subunit interface and may play a role in the structure and function of the aminoacyl-tRNA binding site. This chain is Large ribosomal subunit protein bL19, found in Listeria welshimeri serovar 6b (strain ATCC 35897 / DSM 20650 / CCUG 15529 / CIP 8149 / NCTC 11857 / SLCC 5334 / V8).